Reading from the N-terminus, the 746-residue chain is Polyribonucleotide nucleotidyltransferase (746 aa).

Residues D515 and D521 each coordinate Mg(2+). The 60-residue stretch at 581-640 (PRVIAVKIPVDKIGEVIGPKGKMINQIQEDTGADISIEDDGTVYIGATNGPSADAARSAI) folds into the KH domain. The S1 motif domain maps to 652–724 (GERYLGTVVK…DRGKLSLSPV (73 aa)).

The protein belongs to the polyribonucleotide nucleotidyltransferase family. Mg(2+) is required as a cofactor.

The protein localises to the cytoplasm. The enzyme catalyses RNA(n+1) + phosphate = RNA(n) + a ribonucleoside 5'-diphosphate. Involved in mRNA degradation. Catalyzes the phosphorolysis of single-stranded polyribonucleotides processively in the 3'- to 5'-direction. This is Polyribonucleotide nucleotidyltransferase from Renibacterium salmoninarum (strain ATCC 33209 / DSM 20767 / JCM 11484 / NBRC 15589 / NCIMB 2235).